The following is a 340-amino-acid chain: Glycerol-3-phosphate dehydrogenase [NAD(P)+] (340 aa).

Residues serine 23, tryptophan 24, arginine 43, lysine 44, and lysine 113 each coordinate NADPH. Sn-glycerol 3-phosphate contacts are provided by lysine 113, glycine 141, and threonine 143. Residue alanine 145 participates in NADPH binding. Positions 196, 249, 259, 260, and 261 each coordinate sn-glycerol 3-phosphate. The active-site Proton acceptor is lysine 196. Position 260 (arginine 260) interacts with NADPH. Residue glutamate 286 participates in NADPH binding.

This sequence belongs to the NAD-dependent glycerol-3-phosphate dehydrogenase family.

It localises to the cytoplasm. It carries out the reaction sn-glycerol 3-phosphate + NAD(+) = dihydroxyacetone phosphate + NADH + H(+). It catalyses the reaction sn-glycerol 3-phosphate + NADP(+) = dihydroxyacetone phosphate + NADPH + H(+). It participates in membrane lipid metabolism; glycerophospholipid metabolism. Catalyzes the reduction of the glycolytic intermediate dihydroxyacetone phosphate (DHAP) to sn-glycerol 3-phosphate (G3P), the key precursor for phospholipid synthesis. The sequence is that of Glycerol-3-phosphate dehydrogenase [NAD(P)+] from Zymomonas mobilis subsp. mobilis (strain ATCC 31821 / ZM4 / CP4).